The sequence spans 24 residues: Unknown protein 6 (24 aa).

This Lonomia obliqua (Moth) protein is Unknown protein 6.